We begin with the raw amino-acid sequence, 1331 residues long: X-linked retinitis pigmentosa GTPase regulator-interacting protein 1 (1331 aa).

Disordered regions lie at residues 1–165, 183–220, and 351–374; these read MQHL…PPAF, SQLTHTMTTDSTHVEEIPRSPEKTSKVEKPEQRSSEEC, and HQPLDSSHQPHWSTELTGKQLPPQ. Residues 41–67 are compositionally biased toward basic and acidic residues; it reads NQKELNCRRLHLHEEPTLVKEPSPKQR. 2 stretches are compositionally biased toward polar residues: residues 77 to 86 and 183 to 193; these read VQRSTTTQPD and SQLTHTMTTDS. The segment covering 194–220 has biased composition (basic and acidic residues); the sequence is THVEEIPRSPEKTSKVEKPEQRSSEEC. Coiled-coil stretches lie at residues 236–352 and 498–546; these read ELIR…SSHQ and MCYQ…LRSH. The span at 351 to 367 shows a compositional bias: polar residues; that stretch reads HQPLDSSHQPHWSTELT. In terms of domain architecture, C2 spans 745-870; that stretch reads GARKVQSNES…AQNKSIKGDF (126 aa). Disordered stretches follow at residues 899–1057 and 1088–1146; these read FQMS…VQDK and AEDG…SDDI. Positions 908 to 999 form a coiled coil; the sequence is EGEEKEEEGG…DVLEASFTEE (92 aa). Acidic residues predominate over residues 910–988; it reads EEKEEEGGEE…EEEEEEEDEN (79 aa). Basic and acidic residues-rich tracts occupy residues 1022–1039 and 1088–1115; these read PEKRKPPVIAEKKEREHQ and AEDGGLKAQDKREEPPSPRSALRQEHPS. A compositionally biased stretch (polar residues) spans 1129–1141; that stretch reads CEQASEVSETQTT. The segment at 1136-1326 is interaction with RPGR; that stretch reads SETQTTDSDD…ALHGIYKEMT (191 aa).

The protein belongs to the RPGRIP1 family. In terms of assembly, interacts with NPHP4. Interacts with NEK4. Forms homodimers and elongated homopolymers. Interacts with RPGR. Interacts with SPATA7. Interacts with CEP290/NPHP6; mediating the association between RPGR and CEP290/NPHP6. As to expression, expressed in the retina (at protein level).

Its subcellular location is the cell projection. It localises to the cilium. In terms of biological role, may function as scaffolding protein. Required for normal location of RPGR at the connecting cilium of photoreceptor cells. Required for normal disk morphogenesis and disk organization in the outer segment of photoreceptor cells and for survival of photoreceptor cells. This chain is X-linked retinitis pigmentosa GTPase regulator-interacting protein 1 (Rpgrip1), found in Mus musculus (Mouse).